Consider the following 508-residue polypeptide: Protein NODULATION SIGNALING PATHWAY 2 (508 aa).

Residues 75–98 (ITTTTTTTTTTDEEEEEMETTTTT) are disordered. Residues 108–500 (VGDDSKGLKL…RRLLSASLWT (393 aa)) enclose the GRAS domain. Residues 115–190 (LKLVHLLMAG…NNHHHHNNNK (76 aa)) form a leucine repeat I (LRI) region. The VHIID stretch occupies residues 209–273 (FQLLQDMSPY…NNGPHLRITA (65 aa)). The VHIID signature appears at 240–244 (VHVID). The leucine repeat II (LRII) stretch occupies residues 289–321 (ETGRRLTSFAASLGQPFSFHHCRLDSDETFRPS). The PFYRE stretch occupies residues 331–422 (LVFNCMLNLP…RVFFGPRIAG (92 aa)). The interval 425–500 (GRIYRTGGEE…RRLLSASLWT (76 aa)) is SAW.

Belongs to the GRAS family. In terms of assembly, interacts with RAM1. Interacts with IPN2 and RAD1. As to expression, expressed in roots, shoots and leaves.

The protein resides in the nucleus membrane. It localises to the endoplasmic reticulum. In terms of biological role, transcriptional regulator essential for Nod-factor-induced gene expression. Acts downstream of calcium spiking and DMI3, a calcium/calmodulin-dependent protein kinase (CCaMK). Transcription factor involved in the control of strigolactone biosynthesis in roots through the activation of the beta-carotene isomerase D27, which participates in a pathway leading to biosynthesis of strigolactones. The polypeptide is Protein NODULATION SIGNALING PATHWAY 2 (Medicago truncatula (Barrel medic)).